The chain runs to 386 residues: 2,3-diketo-5-methylthiopentyl-1-phosphate enolase (386 aa).

Lys-85 serves as the catalytic Proton acceptor. Substrate-binding positions include Lys-131, 157 to 160 (KDDE), His-248, Gly-316, and 338 to 339 (GT). Mg(2+) is bound by residues Lys-157, Asp-159, and Glu-160. The residue at position 157 (Lys-157) is an N6-carboxylysine.

This sequence belongs to the RuBisCO large chain family. Type IV subfamily. In terms of assembly, homodimer. The cofactor is Mg(2+).

It carries out the reaction 5-methylsulfanyl-2,3-dioxopentyl phosphate = 2-hydroxy-5-methylsulfanyl-3-oxopent-1-enyl phosphate. It participates in amino-acid biosynthesis; L-methionine biosynthesis via salvage pathway; L-methionine from S-methyl-5-thio-alpha-D-ribose 1-phosphate: step 3/6. Functionally, catalyzes the enolization of 2,3-diketo-5-methylthiopentyl-1-phosphate (DK-MTP-1-P) into 2-hydroxy-3-keto-5-methylthiopentenyl-1-phosphate (HK-MTPenyl-1-P). In Microcystis aeruginosa (strain NIES-843 / IAM M-2473), this protein is 2,3-diketo-5-methylthiopentyl-1-phosphate enolase.